The sequence spans 865 residues: Protein translocase subunit SecA (865 aa).

ATP contacts are provided by residues Gln-93, 111 to 115, and Asp-501; that span reads GEGKT. Residues Cys-841, Cys-843, Cys-852, and Cys-853 each coordinate Zn(2+).

Belongs to the SecA family. In terms of assembly, monomer and homodimer. Part of the essential Sec protein translocation apparatus which comprises SecA, SecYEG and auxiliary proteins SecDF-YajC and YidC. Zn(2+) is required as a cofactor.

Its subcellular location is the cell inner membrane. It is found in the cytoplasm. It carries out the reaction ATP + H2O + cellular proteinSide 1 = ADP + phosphate + cellular proteinSide 2.. Part of the Sec protein translocase complex. Interacts with the SecYEG preprotein conducting channel. Has a central role in coupling the hydrolysis of ATP to the transfer of proteins into and across the cell membrane, serving as an ATP-driven molecular motor driving the stepwise translocation of polypeptide chains across the membrane. The sequence is that of Protein translocase subunit SecA from Helicobacter pylori (strain G27).